The primary structure comprises 686 residues: Band 4.1-like protein 4A (686 aa).

The 289-residue stretch at Phe11–Glu299 folds into the FERM domain. The residue at position 304 (Ser304) is a Phosphoserine. A disordered region spans residues Arg331 to Thr686. Positions Ala357–Asn376 are enriched in polar residues. A phosphoserine mark is found at Ser389, Ser393, and Ser402. Over residues Gly418–Ser428 the composition is skewed to polar residues. A compositionally biased stretch (low complexity) spans Arg479–Glu489. 2 stretches are compositionally biased toward basic and acidic residues: residues Val518–Gln527 and Gln547–Val561. The span at Ile588 to Arg601 shows a compositional bias: basic residues. Over residues Gly648–Pro658 the composition is skewed to basic and acidic residues. Over residues Thr673–Thr686 the composition is skewed to polar residues.

In terms of tissue distribution, expressed in many tissues. High levels of expression in brain, liver, thymus and peripheral blood leukocytes and low levels of expression in heart, kidney, testis and colon.

It is found in the cytoplasm. It localises to the cytoskeleton. The sequence is that of Band 4.1-like protein 4A from Homo sapiens (Human).